The following is a 410-amino-acid chain: Enterobactin exporter EntS (410 aa).

The Cytoplasmic portion of the chain corresponds to 1–21 (MNKQSWLLNLSLLKTHPAFRA). Residues 22-42 (VFLARFISIVSLGLLGVAVPV) form a helical membrane-spanning segment. Topologically, residues 43-55 (QIQMMTHSTWQVG) are periplasmic. The chain crosses the membrane as a helical span at residues 56-76 (LSVTLTGGAMFVGLMVGGVLA). Over 77–83 (DRYERKK) the chain is Cytoplasmic. The helical transmembrane segment at 84–104 (VILLARGTCGIGFIGLCLNAL) threads the bilayer. Over 105–109 (LPEPS) the chain is Periplasmic. Residues 110 to 130 (LLAIYLLGLWDGFFASLGVTA) form a helical membrane-spanning segment. The Cytoplasmic portion of the chain corresponds to 131–156 (LLAATSALVGRENLMQAGAITMLTVR). The helical transmembrane segment at 157-177 (LGSVISPMIGGLLLATGGVAW) threads the bilayer. Residue Asn178 is a topological domain, periplasmic. The helical transmembrane segment at 179–199 (YGLAAAGTFITLLPLLSLPEL) threads the bilayer. The Cytoplasmic portion of the chain corresponds to 200–218 (PPPPQPLEHPLKSLLAGFR). The chain crosses the membrane as a helical span at residues 219–233 (FLLASPLLGGLLTMA). Residues 234–250 (SAVLVLYPALADNWQMS) are Periplasmic-facing. A helical transmembrane segment spans residues 251 to 271 (AAQIGFLYAAIPLGAAIGALT). At 272–281 (SGKLAHSARP) the chain is on the cytoplasmic side. The helical transmembrane segment at 282-301 (GLLMLLSTLGSFLAIGLFGL) threads the bilayer. Topologically, residues 302 to 307 (MPMWIL) are periplasmic. A helical transmembrane segment spans residues 308–330 (GVVCLALFGWLSAVSSLLQYTML). The Cytoplasmic segment spans residues 331–350 (QTQTPEAMLGRINGLWTAQN). Residues 351 to 371 (VTGDAIGAALLGGLGAMMTPV) traverse the membrane as a helical segment. Ala372 is a topological domain (periplasmic). A helical transmembrane segment spans residues 373–393 (SASASGFGLLIIGVLLLLVLV). The Cytoplasmic segment spans residues 394 to 410 (ELRRFRQTPPQVTASDS).

This sequence belongs to the major facilitator superfamily. EntS (TC 2.A.1.38) family.

Its subcellular location is the cell inner membrane. In terms of biological role, component of an export pathway for enterobactin. This Shigella flexneri protein is Enterobactin exporter EntS.